Here is a 106-residue protein sequence, read N- to C-terminus: DNA-directed RNA polymerase subunit Rpo6 (106 aa).

The protein belongs to the archaeal Rpo6/eukaryotic RPB6 RNA polymerase subunit family. Part of the RNA polymerase complex.

The protein resides in the cytoplasm. The enzyme catalyses RNA(n) + a ribonucleoside 5'-triphosphate = RNA(n+1) + diphosphate. In terms of biological role, DNA-dependent RNA polymerase (RNAP) catalyzes the transcription of DNA into RNA using the four ribonucleoside triphosphates as substrates. The chain is DNA-directed RNA polymerase subunit Rpo6 from Pyrobaculum aerophilum (strain ATCC 51768 / DSM 7523 / JCM 9630 / CIP 104966 / NBRC 100827 / IM2).